The sequence spans 750 residues: NAD(P)H-quinone oxidoreductase subunit 5, chloroplastic (750 aa).

Transmembrane regions (helical) follow at residues 9-29 (WIIP…LLLF), 40-60 (WAFT…NLSI), 89-109 (IDPL…MVLI), 125-145 (FAYM…SNLI), 147-167 (IYIF…FWFT), 185-205 (GDFG…SFEF), 230-250 (AALL…HIWL), 258-278 (TPIS…FLVA), 283-303 (LFIV…ITVL), 327-347 (LGYM…FHLI), 354-374 (ALLF…VGYS), 396-416 (TSFL…CFWS), 425-445 (WLYS…TAFY), 548-568 (LFPL…GIPF), 607-627 (IFSV…YKPI), and 724-744 (LFFY…FYLF).

It belongs to the complex I subunit 5 family. NDH is composed of at least 16 different subunits, 5 of which are encoded in the nucleus.

It localises to the plastid. The protein localises to the chloroplast thylakoid membrane. It carries out the reaction a plastoquinone + NADH + (n+1) H(+)(in) = a plastoquinol + NAD(+) + n H(+)(out). It catalyses the reaction a plastoquinone + NADPH + (n+1) H(+)(in) = a plastoquinol + NADP(+) + n H(+)(out). Its function is as follows. NDH shuttles electrons from NAD(P)H:plastoquinone, via FMN and iron-sulfur (Fe-S) centers, to quinones in the photosynthetic chain and possibly in a chloroplast respiratory chain. The immediate electron acceptor for the enzyme in this species is believed to be plastoquinone. Couples the redox reaction to proton translocation, and thus conserves the redox energy in a proton gradient. The sequence is that of NAD(P)H-quinone oxidoreductase subunit 5, chloroplastic (ndhF) from Tecoma stans (Yellow bells).